The primary structure comprises 200 residues: Probable nicotinate-nucleotide adenylyltransferase (200 aa).

This sequence belongs to the NadD family.

The catalysed reaction is nicotinate beta-D-ribonucleotide + ATP + H(+) = deamido-NAD(+) + diphosphate. Its pathway is cofactor biosynthesis; NAD(+) biosynthesis; deamido-NAD(+) from nicotinate D-ribonucleotide: step 1/1. Catalyzes the reversible adenylation of nicotinate mononucleotide (NaMN) to nicotinic acid adenine dinucleotide (NaAD). In Clostridium botulinum (strain Alaska E43 / Type E3), this protein is Probable nicotinate-nucleotide adenylyltransferase.